A 547-amino-acid chain; its full sequence is Chaperonin GroEL 1 (547 aa).

Residues 29-32, 86-90, glycine 418, 482-484, and aspartate 498 contribute to the ATP site; these read TLGP, DGTTT, and NAA.

It belongs to the chaperonin (HSP60) family. As to quaternary structure, forms a cylinder of 14 subunits composed of two heptameric rings stacked back-to-back. Interacts with the co-chaperonin GroES.

It is found in the cytoplasm. It catalyses the reaction ATP + H2O + a folded polypeptide = ADP + phosphate + an unfolded polypeptide.. Together with its co-chaperonin GroES, plays an essential role in assisting protein folding. The GroEL-GroES system forms a nano-cage that allows encapsulation of the non-native substrate proteins and provides a physical environment optimized to promote and accelerate protein folding. This is Chaperonin GroEL 1 from Corynebacterium jeikeium (strain K411).